The primary structure comprises 278 residues: Putative phosphoenolpyruvate synthase regulatory protein (278 aa).

157–164 (GVSRSGKT) provides a ligand contact to ADP.

It belongs to the pyruvate, phosphate/water dikinase regulatory protein family. PSRP subfamily.

The enzyme catalyses [pyruvate, water dikinase] + ADP = [pyruvate, water dikinase]-phosphate + AMP + H(+). It carries out the reaction [pyruvate, water dikinase]-phosphate + phosphate + H(+) = [pyruvate, water dikinase] + diphosphate. In terms of biological role, bifunctional serine/threonine kinase and phosphorylase involved in the regulation of the phosphoenolpyruvate synthase (PEPS) by catalyzing its phosphorylation/dephosphorylation. This chain is Putative phosphoenolpyruvate synthase regulatory protein, found in Vibrio parahaemolyticus serotype O3:K6 (strain RIMD 2210633).